The primary structure comprises 432 residues: Enolase (432 aa).

Gln167 lines the (2R)-2-phosphoglycerate pocket. Glu209 serves as the catalytic Proton donor. Mg(2+) contacts are provided by Asp246, Glu289, and Asp316. Residues Lys341, Arg370, Ser371, and Lys392 each coordinate (2R)-2-phosphoglycerate. Lys341 serves as the catalytic Proton acceptor.

This sequence belongs to the enolase family. Requires Mg(2+) as cofactor.

The protein resides in the cytoplasm. It localises to the secreted. It is found in the cell surface. It catalyses the reaction (2R)-2-phosphoglycerate = phosphoenolpyruvate + H2O. It functions in the pathway carbohydrate degradation; glycolysis; pyruvate from D-glyceraldehyde 3-phosphate: step 4/5. Functionally, catalyzes the reversible conversion of 2-phosphoglycerate (2-PG) into phosphoenolpyruvate (PEP). It is essential for the degradation of carbohydrates via glycolysis. The chain is Enolase from Thermotoga neapolitana (strain ATCC 49049 / DSM 4359 / NBRC 107923 / NS-E).